The primary structure comprises 320 residues: Acetyl-coenzyme A carboxylase carboxyl transferase subunit alpha (320 aa).

The 254-residue stretch at 42–295 (IGDKAAQALK…GDAIAEAFND (254 aa)) folds into the CoA carboxyltransferase C-terminal domain.

The protein belongs to the AccA family. Acetyl-CoA carboxylase is a heterohexamer composed of biotin carboxyl carrier protein (AccB), biotin carboxylase (AccC) and two subunits each of ACCase subunit alpha (AccA) and ACCase subunit beta (AccD).

The protein localises to the cytoplasm. It carries out the reaction N(6)-carboxybiotinyl-L-lysyl-[protein] + acetyl-CoA = N(6)-biotinyl-L-lysyl-[protein] + malonyl-CoA. Its pathway is lipid metabolism; malonyl-CoA biosynthesis; malonyl-CoA from acetyl-CoA: step 1/1. Component of the acetyl coenzyme A carboxylase (ACC) complex. First, biotin carboxylase catalyzes the carboxylation of biotin on its carrier protein (BCCP) and then the CO(2) group is transferred by the carboxyltransferase to acetyl-CoA to form malonyl-CoA. The chain is Acetyl-coenzyme A carboxylase carboxyl transferase subunit alpha from Nitrobacter hamburgensis (strain DSM 10229 / NCIMB 13809 / X14).